Consider the following 240-residue polypeptide: Protein FANTASTIC FOUR 2 (240 aa).

Disordered regions lie at residues 89–124 and 177–229; these read TTPR…PPIK and LLSH…KPML. One can recognise an FAF domain in the interval 117-171; sequence NSFPPPIKFVEDSKYNRMVRWLGEDGRIVVQAIRVSSPPSCFVSERGEGRLRLIL. The span at 184-200 shows a compositional bias: acidic residues; it reads EEEEEETEEGIDEETSE. A compositionally biased stretch (basic residues) spans 207–216; it reads GNKKFSRFSR. The span at 217-226 shows a compositional bias: basic and acidic residues; sequence RCKENGREPK.

This sequence belongs to the fantastic four family. As to expression, expressed in the shoot apex, stamens, carpels and young siliques. Detected in provascular and vascular tissue, and in the center of the vegetative and inflorescence meristems. Expressed in the funiculus. In roots and leaves, predominantly expressed in phloem.

Functionally, regulates the size of the shoot meristem by modulating the CLV3-WUS feedback loop. Can repress WUS but is under negative control by CLV3. This Arabidopsis thaliana (Mouse-ear cress) protein is Protein FANTASTIC FOUR 2 (FAF2).